We begin with the raw amino-acid sequence, 180 residues long: Probable phospholipid hydroperoxide glutathione peroxidase (180 aa).

Residue Cys-54 is part of the active site.

It belongs to the glutathione peroxidase family.

Its subcellular location is the cytoplasm. It catalyses the reaction a hydroperoxy polyunsaturated fatty acid + 2 glutathione = a hydroxy polyunsaturated fatty acid + glutathione disulfide + H2O. In terms of biological role, protects cells and enzymes from oxidative damage, by catalyzing the reduction of hydrogen peroxide, lipid peroxides and organic hydroperoxide, by glutathione. The protein is Probable phospholipid hydroperoxide glutathione peroxidase (GPXHA-2) of Helianthus annuus (Common sunflower).